The following is a 181-amino-acid chain: Shikimate kinase 2 (181 aa).

12-17 (GCGKTT) contributes to the ATP binding site. The Mg(2+) site is built by T16 and D32. 3 residues coordinate substrate: D34, R58, and G79. An LID domain region spans residues 112-126 (EAEPEAELRPTLTGK). R120 contacts ATP. R139 contributes to the substrate binding site.

This sequence belongs to the shikimate kinase family. AroL subfamily. Monomer. Mg(2+) is required as a cofactor.

The protein localises to the cytoplasm. It carries out the reaction shikimate + ATP = 3-phosphoshikimate + ADP + H(+). It functions in the pathway metabolic intermediate biosynthesis; chorismate biosynthesis; chorismate from D-erythrose 4-phosphate and phosphoenolpyruvate: step 5/7. Functionally, catalyzes the specific phosphorylation of the 3-hydroxyl group of shikimic acid using ATP as a cosubstrate. The sequence is that of Shikimate kinase 2 from Salmonella schwarzengrund (strain CVM19633).